The sequence spans 384 residues: MNKLNSVVVARGAVAVLLIGLAGCTGSLLEPKKIEYKTASANKVPTLEVPPDLTSPTRDDRYAVPDTSGKGAATFSAYSAERSPQARAQQKSDVLPEVDTARIERSGNQRWLVASGSPDKLWGPVKDFWQETGFVIKLELPDAGVMETDWAENRAKIQQDFIRNILGKVIDSVYSTAERDKFRTRLEPGSTPGTTDIFISHRGMYEIFVTEGKDQTKWQPRPADPELEAEMLRRLMVRLGSEEKRATAAMQAAQEKPLERAKMTRGPDGSGTLEVEESFDRAWRRVGLALDRVGFTVEDRDRSRGLYFVRYVDPEIDNEKKEEGFLSKLNIFKSSSSGKPQTQYRIFVKDDASRSTVQVLTLEGGVDQSETSKRILSLLYDQLK.

An N-terminal signal peptide occupies residues 1 to 23; that stretch reads MNKLNSVVVARGAVAVLLIGLAG. Residue C24 is the site of N-palmitoyl cysteine attachment. C24 carries the S-diacylglycerol cysteine lipid modification. 2 disordered regions span residues 47 to 70 and 251 to 273; these read LEVP…TSGK and QAAQ…SGTL.

The protein belongs to the BamC family. In terms of assembly, part of the Bam complex.

The protein resides in the cell outer membrane. Part of the outer membrane protein assembly complex, which is involved in assembly and insertion of beta-barrel proteins into the outer membrane. This chain is Outer membrane protein assembly factor BamC, found in Accumulibacter regalis.